We begin with the raw amino-acid sequence, 264 residues long: MSPTAGENILLKAEALSVYYGNSLAVKDVYLEVPKNKIVAFIGPSGCGKSTILRCFNRMNDLINGCRVQGRITFHDQEINDGRVDAVELRSRIGMVFQKPNPFPKSIYENIAYGARINGYQGDMDELVEKSLRQAALWDEVKDKLKDSGLALSGGQQQRLCIARTVAVQPEVILMDEPCSALDPISTLAIEELMQTLKEQYTIIIVTHNMQQASRTSDYTAFFNARATEGGGKMGYLVEFDTTEKIFDSPDQEATADYVSGRFG.

Residues 11–250 (LKAEALSVYY…DTTEKIFDSP (240 aa)) form the ABC transporter domain. An ATP-binding site is contributed by 43 to 50 (GPSGCGKS).

Belongs to the ABC transporter superfamily. Phosphate importer (TC 3.A.1.7) family. As to quaternary structure, the complex is composed of two ATP-binding proteins (PstB), two transmembrane proteins (PstC and PstA) and a solute-binding protein (PstS).

It is found in the cell inner membrane. It carries out the reaction phosphate(out) + ATP + H2O = ADP + 2 phosphate(in) + H(+). Part of the ABC transporter complex PstSACB involved in phosphate import. Responsible for energy coupling to the transport system. This Synechococcus elongatus (strain ATCC 33912 / PCC 7942 / FACHB-805) (Anacystis nidulans R2) protein is Phosphate import ATP-binding protein PstB.